The chain runs to 501 residues: ATP synthase subunit alpha (501 aa).

169-176 (GDRQTGKT) contacts ATP.

It belongs to the ATPase alpha/beta chains family. F-type ATPases have 2 components, CF(1) - the catalytic core - and CF(0) - the membrane proton channel. CF(1) has five subunits: alpha(3), beta(3), gamma(1), delta(1), epsilon(1). CF(0) has three main subunits: a(1), b(2) and c(9-12). The alpha and beta chains form an alternating ring which encloses part of the gamma chain. CF(1) is attached to CF(0) by a central stalk formed by the gamma and epsilon chains, while a peripheral stalk is formed by the delta and b chains.

The protein localises to the cell membrane. The enzyme catalyses ATP + H2O + 4 H(+)(in) = ADP + phosphate + 5 H(+)(out). In terms of biological role, produces ATP from ADP in the presence of a proton gradient across the membrane. The alpha chain is a regulatory subunit. The polypeptide is ATP synthase subunit alpha (Streptococcus gordonii (strain Challis / ATCC 35105 / BCRC 15272 / CH1 / DL1 / V288)).